Reading from the N-terminus, the 132-residue chain is uncharacterized protein (132 aa).

WD repeat units follow at residues 14 to 53 and 58 to 97; these read DLQD…LEIL and AHDD…LANV.

This is an uncharacterized protein from Acanthamoeba polyphaga (Amoeba).